Consider the following 448-residue polypeptide: Divalent metal cation transporter MntH (448 aa).

A run of 11 helical transmembrane segments spans residues 41-61, 69-89, 117-137, 147-167, 176-196, 215-235, 270-290, 307-327, 363-383, 384-404, and 424-444; these read LFAFMGPGALIAVGYVDPGNW, SEFGYTLLSVILISNILAVLL, GFVLWILAELAIIATDIAEVI, FGIPLIWGVCITALDIFLVLF, IEVIVITLMVTILVCFGAEMV, IVTNPAMLYIALGILGATVMP, FSLTIALLINASILILAAAAF, LLNPTLGSSIASTVFAVALLA, VLAIVPAVIITALYGANGINE, LLIFSQVILSMQLSFAVIPLV, and IISWAVAIFIAILNIYLLFYT.

It belongs to the NRAMP family.

It is found in the cell membrane. Its function is as follows. H(+)-stimulated, divalent metal cation uptake system. The chain is Divalent metal cation transporter MntH from Listeria welshimeri serovar 6b (strain ATCC 35897 / DSM 20650 / CCUG 15529 / CIP 8149 / NCTC 11857 / SLCC 5334 / V8).